We begin with the raw amino-acid sequence, 917 residues long: Auxin response factor 17 (917 aa).

Residues 134–236 constitute a DNA-binding region (TF-B3); it reads FCKTLTASDT…QLLLGIRRAN (103 aa). The segment at 571 to 649 is disordered; that stretch reads SVPNALSPFS…RPTAVPVPDP (79 aa). Low complexity-rich tracts occupy residues 576 to 594 and 604 to 620; these read LSPF…MTLQ and SYPD…NTST. The PB1 domain occupies 786–870; sequence ATFVKVYKSG…SCIKILSPQE (85 aa).

Belongs to the ARF family. Homodimers and heterodimers.

It localises to the nucleus. Its function is as follows. Auxin response factors (ARFs) are transcriptional factors that bind specifically to the DNA sequence 5'-TGTCTC-3' found in the auxin-responsive promoter elements (AuxREs). The sequence is that of Auxin response factor 17 (ARF17) from Oryza sativa subsp. indica (Rice).